The sequence spans 120 residues: uncharacterized protein (120 aa).

The first 18 residues, 1 to 18 (MRSWIPLLVLFAVLAVFA), serve as a signal peptide directing secretion. The segment at 20 to 99 (AGKSSESDES…GDNRVKRDGL (80 aa)) is disordered.

This is an uncharacterized protein from Caenorhabditis elegans.